The following is a 37-amino-acid chain: Large ribosomal subunit protein bL36 (37 aa).

Belongs to the bacterial ribosomal protein bL36 family.

The protein is Large ribosomal subunit protein bL36 of Francisella tularensis subsp. mediasiatica (strain FSC147).